Reading from the N-terminus, the 98-residue chain is NADH-ubiquinone oxidoreductase chain 4L (98 aa).

The next 3 helical transmembrane spans lie at 1–21, 29–49, and 61–81; these read MPVV…GLLV, SLLC…VTVL, and IILL…LVMV.

The protein belongs to the complex I subunit 4L family. In terms of assembly, core subunit of respiratory chain NADH dehydrogenase (Complex I) which is composed of 45 different subunits.

It is found in the mitochondrion inner membrane. It catalyses the reaction a ubiquinone + NADH + 5 H(+)(in) = a ubiquinol + NAD(+) + 4 H(+)(out). Functionally, core subunit of the mitochondrial membrane respiratory chain NADH dehydrogenase (Complex I) which catalyzes electron transfer from NADH through the respiratory chain, using ubiquinone as an electron acceptor. Part of the enzyme membrane arm which is embedded in the lipid bilayer and involved in proton translocation. The sequence is that of NADH-ubiquinone oxidoreductase chain 4L (MT-ND4L) from Ursus arctos (Brown bear).